Here is a 324-residue protein sequence, read N- to C-terminus: Porphobilinogen deaminase 1 (324 aa).

C249 is subject to S-(dipyrrolylmethanemethyl)cysteine.

This sequence belongs to the HMBS family. As to quaternary structure, monomer. It depends on dipyrromethane as a cofactor.

It catalyses the reaction 4 porphobilinogen + H2O = hydroxymethylbilane + 4 NH4(+). It functions in the pathway porphyrin-containing compound metabolism; protoporphyrin-IX biosynthesis; coproporphyrinogen-III from 5-aminolevulinate: step 2/4. Functionally, tetrapolymerization of the monopyrrole PBG into the hydroxymethylbilane pre-uroporphyrinogen in several discrete steps. The chain is Porphobilinogen deaminase 1 (hemC1) from Streptomyces avermitilis (strain ATCC 31267 / DSM 46492 / JCM 5070 / NBRC 14893 / NCIMB 12804 / NRRL 8165 / MA-4680).